The sequence spans 426 residues: NADH-quinone oxidoreductase subunit H 1 (426 aa).

Helical transmembrane passes span 22-42 (LWAT…VMLM), 91-111 (FLFW…YLVI), 124-144 (IGVL…VMAG), 163-183 (MVSY…MTSL), 206-226 (FIFK…IAMV), 258-278 (LFFL…VTLW), 299-319 (FSVF…IGWV), 331-351 (AIGL…LLIP), 357-377 (VSDI…YIWY), and 392-412 (IGWK…AVLG).

This sequence belongs to the complex I subunit 1 family. As to quaternary structure, NDH-1 is composed of 14 different subunits. Subunits NuoA, H, J, K, L, M, N constitute the membrane sector of the complex.

The protein localises to the cell inner membrane. The enzyme catalyses a quinone + NADH + 5 H(+)(in) = a quinol + NAD(+) + 4 H(+)(out). NDH-1 shuttles electrons from NADH, via FMN and iron-sulfur (Fe-S) centers, to quinones in the respiratory chain. The immediate electron acceptor for the enzyme in this species is believed to be ubiquinone. Couples the redox reaction to proton translocation (for every two electrons transferred, four hydrogen ions are translocated across the cytoplasmic membrane), and thus conserves the redox energy in a proton gradient. This subunit may bind ubiquinone. This chain is NADH-quinone oxidoreductase subunit H 1, found in Koribacter versatilis (strain Ellin345).